A 351-amino-acid polypeptide reads, in one-letter code: Actin maturation protease (351 aa).

Pro residues predominate over residues methionine 1 to proline 19. Residues methionine 1–arginine 70 are disordered. Over residues leucine 36–threonine 50 the composition is skewed to low complexity. Positions proline 51–alanine 64 are enriched in pro residues. The tract at residues serine 124–glycine 244 is peptidase C39-like. Cysteine 132 is a catalytic residue. At serine 316 the chain carries Phosphoserine.

Belongs to the ACTMAP family. In terms of assembly, interacts (via N-terminus) with PFN2 isoforms IIa and IIb; the interactions may facilitate efficient cleavage of the acetylated N-terminus of immature actin. Interacts with PFN1.

The protein localises to the cytoplasm. It carries out the reaction N-terminal N(alpha)-acetyl-L-methionyl-L-aspartyl-[protein] + H2O = N-terminal L-aspartyl-[protein] + N-acetyl-L-methionine. The enzyme catalyses N-terminal N(alpha)-acetyl-L-methionyl-L-glutamyl-[protein] + H2O = N-terminal L-glutamyl-[protein] + N-acetyl-L-methionine. The catalysed reaction is N-terminal N(alpha)-acetyl-L-cysteinyl-L-aspartyl-[protein] + H2O = N-terminal L-aspartyl-[protein] + N-acetyl-L-cysteine. It catalyses the reaction N-terminal N(alpha)-acetyl-L-cysteinyl-L-glutamyl-[protein] + H2O = N-terminal L-glutamyl-[protein] + N-acetyl-L-cysteine. In terms of biological role, actin maturation protease that specifically mediates the cleavage of immature acetylated N-terminal actin, thereby contributing to actin maturation. Cleaves N-terminal acetylated methionine of immature cytoplasmic beta- and gamma-actins ACTB and ACTG1 after translation. Cleaves N-terminal acetylated cysteine of muscle alpha-actins ACTA1, ACTC1 and ACTA2 after canonical removal of N-terminal methionine. The protein is Actin maturation protease of Homo sapiens (Human).